We begin with the raw amino-acid sequence, 107 residues long: Sulmotoxin 1 (107 aa).

The N-terminal stretch at 1 to 19 (MKTLLLALAVVVLVCLGSA) is a signal peptide. Positions 20-34 (NELGLGRQRVDRRRR) are excised as a propeptide. Cystine bridges form between C44/C68, C47/C55, C61/C83, C87/C98, and C99/C104.

The protein belongs to the three-finger toxin family. Ancestral subfamily. Boigatoxin sub-subfamily. Monomer. In terms of tissue distribution, expressed by the venom gland.

The protein localises to the secreted. Mammal-specific neurotoxin (tested on mice). Not toxic to lizards (tested on geckos). This chain is Sulmotoxin 1, found in Spilotes sulphureus (Amazon puffing snake).